Reading from the N-terminus, the 205-residue chain is V-type ATP synthase subunit E (205 aa).

Belongs to the V-ATPase E subunit family.

In terms of biological role, produces ATP from ADP in the presence of a proton gradient across the membrane. This chain is V-type ATP synthase subunit E, found in Treponema denticola (strain ATCC 35405 / DSM 14222 / CIP 103919 / JCM 8153 / KCTC 15104).